We begin with the raw amino-acid sequence, 634 residues long: 1-deoxy-D-xylulose-5-phosphate synthase (634 aa).

Residues H74 and 115-117 (AHS) each bind thiamine diphosphate. D146 lines the Mg(2+) pocket. Thiamine diphosphate-binding positions include 147–148 (GA), N176, Y283, and E365. Residue N176 coordinates Mg(2+).

This sequence belongs to the transketolase family. DXPS subfamily. Homodimer. The cofactor is Mg(2+). Thiamine diphosphate serves as cofactor.

The enzyme catalyses D-glyceraldehyde 3-phosphate + pyruvate + H(+) = 1-deoxy-D-xylulose 5-phosphate + CO2. Its pathway is metabolic intermediate biosynthesis; 1-deoxy-D-xylulose 5-phosphate biosynthesis; 1-deoxy-D-xylulose 5-phosphate from D-glyceraldehyde 3-phosphate and pyruvate: step 1/1. Catalyzes the acyloin condensation reaction between C atoms 2 and 3 of pyruvate and glyceraldehyde 3-phosphate to yield 1-deoxy-D-xylulose-5-phosphate (DXP). The sequence is that of 1-deoxy-D-xylulose-5-phosphate synthase from Burkholderia ambifaria (strain MC40-6).